A 252-amino-acid polypeptide reads, in one-letter code: Low-density lipoprotein receptor-related protein 5-like protein (252 aa).

LDL-receptor class B repeat units follow at residues Gly3–Ala45, Arg46–Met88, Gly89–Glu132, Gly133–Phe175, and Ile176–Val218. A disordered region spans residues His223–Ser247.

The sequence is that of Low-density lipoprotein receptor-related protein 5-like protein (LRP5L) from Homo sapiens (Human).